Consider the following 274-residue polypeptide: Trypsin-1 (274 aa).

The first 18 residues, methionine 1–cysteine 18, serve as a signal peptide directing secretion. Positions alanine 19 to arginine 47 are cleaved as a propeptide — activation peptide. In terms of domain architecture, Peptidase S1 spans isoleucine 48–glycine 273. Cysteines 73 and 89 form a disulfide. Residues histidine 88 and aspartate 133 each act as charge relay system in the active site. Cystine bridges form between cysteine 198-cysteine 214 and cysteine 225-cysteine 249. Serine 229 serves as the catalytic Charge relay system.

The protein belongs to the peptidase S1 family. As to expression, constitutively expressed at low level in the gut of adult females. Also expressed in the gut of male and female pupae.

The protein localises to the secreted. It catalyses the reaction Preferential cleavage: Arg-|-Xaa, Lys-|-Xaa.. In terms of biological role, major function may be to aid in digestion of the blood meal. The protein is Trypsin-1 (TRYP1) of Anopheles gambiae (African malaria mosquito).